Consider the following 104-residue polypeptide: Defensin-2 (104 aa).

The N-terminal stretch at 1–19 (MKFFVLFAILIAIVHASCA) is a signal peptide. Disulfide bonds link Cys64-Cys95, Cys81-Cys100, and Cys85-Cys102.

This sequence belongs to the invertebrate defensin family. Type 1 subfamily. Low expression in head and thorax.

The protein resides in the secreted. Functionally, antibacterial peptide mostly active against Gram-positive bacteria. The sequence is that of Defensin-2 from Apis mellifera (Honeybee).